Consider the following 490-residue polypeptide: GTPase Der (490 aa).

EngA-type G domains follow at residues 3–166 (PVVA…AEAM) and 200–373 (IKLA…DSAT). Residues 9 to 16 (GRPNVGKS), 56 to 60 (DTGGI), 118 to 121 (NKVD), 206 to 213 (GKPNVGKS), 253 to 257 (DTAGV), and 318 to 321 (NKWD) each bind GTP. Residues 374-458 (RRVSTSMLTR…PIQLRFQEGG (85 aa)) enclose the KH-like domain. Residues 470 to 490 (TVSQERRRKRMVGHIRDKNKD) form a disordered region.

Belongs to the TRAFAC class TrmE-Era-EngA-EngB-Septin-like GTPase superfamily. EngA (Der) GTPase family. As to quaternary structure, associates with the 50S ribosomal subunit.

Functionally, GTPase that plays an essential role in the late steps of ribosome biogenesis. The chain is GTPase Der from Shewanella pealeana (strain ATCC 700345 / ANG-SQ1).